Consider the following 309-residue polypeptide: UPF0282 protein Msed_0584 (309 aa).

This sequence belongs to the UPF0282 family.

This Metallosphaera sedula (strain ATCC 51363 / DSM 5348 / JCM 9185 / NBRC 15509 / TH2) protein is UPF0282 protein Msed_0584.